The chain runs to 298 residues: Acetylglutamate kinase (298 aa).

Substrate is bound by residues 69 to 70 (GG), Arg-91, and Asn-196.

It belongs to the acetylglutamate kinase family. ArgB subfamily.

It localises to the cytoplasm. The catalysed reaction is N-acetyl-L-glutamate + ATP = N-acetyl-L-glutamyl 5-phosphate + ADP. It participates in amino-acid biosynthesis; L-arginine biosynthesis; N(2)-acetyl-L-ornithine from L-glutamate: step 2/4. Functionally, catalyzes the ATP-dependent phosphorylation of N-acetyl-L-glutamate. The chain is Acetylglutamate kinase from Rhodopseudomonas palustris (strain TIE-1).